Consider the following 331-residue polypeptide: MRKVTIFIIIIVALTGFGSVRIKDIADFRGARDNQLFGIGVVVGLNGTGDSGQVNSTLLANMAKAFNVSIDSDSLKTKNSALVMVFADIPPFYKEGMRLDVSVASIGDAKSLEGGFLVQTPLYGADGNVYAVAQGNVSVGGFDVKVSANLQNKYRIVGYIPNGAIVEKEIPFEFVQSNSVTILLKKPDFTTSARVAQAINTTFERKIAKAVDASSIKIEVPSAFEDDIVTFLSLVEEVEVSVDQPARVVVNEKTGTVVFGGNVKILDFTLSYGVFNITVKNGKVESSEEVDATVSSLVSALKNLGATPQDIIAILQTMHSAGVLLADLVVM.

The first 22 residues, 1-22 (MRKVTIFIIIIVALTGFGSVRI), serve as a signal peptide directing secretion.

This sequence belongs to the FlgI family. The basal body constitutes a major portion of the flagellar organelle and consists of four rings (L,P,S, and M) mounted on a central rod.

The protein localises to the periplasm. The protein resides in the bacterial flagellum basal body. Assembles around the rod to form the L-ring and probably protects the motor/basal body from shearing forces during rotation. This is Flagellar P-ring protein from Pseudothermotoga lettingae (strain ATCC BAA-301 / DSM 14385 / NBRC 107922 / TMO) (Thermotoga lettingae).